Consider the following 288-residue polypeptide: Acetyl-coenzyme A carboxylase carboxyl transferase subunit beta (288 aa).

The region spanning 34-288 (LFAKCPACKH…HLVAFHGGVS (255 aa)) is the CoA carboxyltransferase N-terminal domain. Positions 38, 41, 56, and 59 each coordinate Zn(2+). Residues 38 to 59 (CPACKHMIYQKDLGPAKICPTC) form a C4-type zinc finger.

It belongs to the AccD/PCCB family. Acetyl-CoA carboxylase is a heterohexamer composed of biotin carboxyl carrier protein (AccB), biotin carboxylase (AccC) and two subunits each of ACCase subunit alpha (AccA) and ACCase subunit beta (AccD). Zn(2+) serves as cofactor.

The protein resides in the cytoplasm. The catalysed reaction is N(6)-carboxybiotinyl-L-lysyl-[protein] + acetyl-CoA = N(6)-biotinyl-L-lysyl-[protein] + malonyl-CoA. Its pathway is lipid metabolism; malonyl-CoA biosynthesis; malonyl-CoA from acetyl-CoA: step 1/1. Component of the acetyl coenzyme A carboxylase (ACC) complex. Biotin carboxylase (BC) catalyzes the carboxylation of biotin on its carrier protein (BCCP) and then the CO(2) group is transferred by the transcarboxylase to acetyl-CoA to form malonyl-CoA. This is Acetyl-coenzyme A carboxylase carboxyl transferase subunit beta from Streptococcus equi subsp. zooepidemicus (strain MGCS10565).